The sequence spans 249 residues: NAD(P)H-quinone oxidoreductase subunit K 2 (249 aa).

4 residues coordinate [4Fe-4S] cluster: Cys54, Cys55, Cys119, and Cys150.

Belongs to the complex I 20 kDa subunit family. As to quaternary structure, NDH-1 can be composed of about 15 different subunits; different subcomplexes with different compositions have been identified which probably have different functions. [4Fe-4S] cluster serves as cofactor.

Its subcellular location is the cell inner membrane. It catalyses the reaction a plastoquinone + NADH + (n+1) H(+)(in) = a plastoquinol + NAD(+) + n H(+)(out). It carries out the reaction a plastoquinone + NADPH + (n+1) H(+)(in) = a plastoquinol + NADP(+) + n H(+)(out). NDH-1 shuttles electrons from an unknown electron donor, via FMN and iron-sulfur (Fe-S) centers, to quinones in the respiratory and/or the photosynthetic chain. The immediate electron acceptor for the enzyme in this species is believed to be plastoquinone. Couples the redox reaction to proton translocation, and thus conserves the redox energy in a proton gradient. Cyanobacterial NDH-1 also plays a role in inorganic carbon-concentration. This is NAD(P)H-quinone oxidoreductase subunit K 2 from Gloeobacter violaceus (strain ATCC 29082 / PCC 7421).